A 271-amino-acid chain; its full sequence is Urease accessory protein UreD (271 aa).

The protein belongs to the UreD family. UreD, UreF and UreG form a complex that acts as a GTP-hydrolysis-dependent molecular chaperone, activating the urease apoprotein by helping to assemble the nickel containing metallocenter of UreC. The UreE protein probably delivers the nickel.

It localises to the cytoplasm. In terms of biological role, required for maturation of urease via the functional incorporation of the urease nickel metallocenter. This is Urease accessory protein UreD from Haemophilus influenzae (strain 86-028NP).